The primary structure comprises 257 residues: MAIHLVIIDALNLIRRVHSAQPNQDDIQAVVTTTGRTINRILKETEPTHIIAVFDHHLQDRGWRAEVLPKYKEDRKPMPEALQKGMDAIQESWWKLGIDSLLSDGDEADDLVATLANKVASRNEQVTIVSTDKGYCQLLSPTLRIRDYFQHRWLDEPFIEKEFGLKPEQLADYWGLAGISSSKITGIPGIGPKAALEILTQFPTIEAANESDELPKKYRKKFDEYYNTAILCRKVAGLRTDIELGFNLQDIRYEKPE.

Residue Asp109 coordinates Mg(2+). The 91-residue stretch at 165 to 255 folds into the 5'-3' exonuclease domain; that stretch reads LKPEQLADYW…FNLQDIRYEK (91 aa). K(+) contacts are provided by Leu176, Ala177, Ile187, and Ile190. An interaction with DNA region spans residues 189–194; it reads GIGPKA.

It belongs to the Xni family. Mg(2+) is required as a cofactor. The cofactor is K(+).

In terms of biological role, has flap endonuclease activity. During DNA replication, flap endonucleases cleave the 5'-overhanging flap structure that is generated by displacement synthesis when DNA polymerase encounters the 5'-end of a downstream Okazaki fragment. The protein is Flap endonuclease Xni of Aliivibrio salmonicida (strain LFI1238) (Vibrio salmonicida (strain LFI1238)).